The sequence spans 463 residues: L-seryl-tRNA(Sec) selenium transferase (463 aa).

Position 295 is an N6-(pyridoxal phosphate)lysine (Lys295).

Belongs to the SelA family. As to quaternary structure, homodecamer; pentamer of dimers. Binds only one seryl-tRNA(Sec) per dimer. The cofactor is pyridoxal 5'-phosphate.

Its subcellular location is the cytoplasm. The enzyme catalyses L-seryl-tRNA(Sec) + selenophosphate + H(+) = L-selenocysteinyl-tRNA(Sec) + phosphate. It functions in the pathway aminoacyl-tRNA biosynthesis; selenocysteinyl-tRNA(Sec) biosynthesis; selenocysteinyl-tRNA(Sec) from L-seryl-tRNA(Sec) (bacterial route): step 1/1. Converts seryl-tRNA(Sec) to selenocysteinyl-tRNA(Sec) required for selenoprotein biosynthesis. This chain is L-seryl-tRNA(Sec) selenium transferase, found in Salmonella typhimurium (strain LT2 / SGSC1412 / ATCC 700720).